We begin with the raw amino-acid sequence, 416 residues long: NADH-quinone oxidoreductase subunit H (416 aa).

The next 9 helical transmembrane spans lie at 16 to 36, 84 to 104, 124 to 144, 165 to 185, 197 to 217, 260 to 280, 288 to 308, 320 to 340, and 353 to 373; these read LILAKAVGVFVFLVLTVLAAI, PVYLLAPVISVIPAFLAFAVI, LAVAVLYILAVTSVGVYGIVL, VVSYEIAMALSFATVFLYAGT, STWYVFLLLPSFLVYVTSMVG, VSALATTMFLGGWHAPWPISL, WWPLLWFTAKVWVFLFVYIWL, FMAIGWKMLIPVSLAWIMIVA, and WASGLLIAGTVLTFGLAVILW.

It belongs to the complex I subunit 1 family. In terms of assembly, NDH-1 is composed of 14 different subunits. Subunits NuoA, H, J, K, L, M, N constitute the membrane sector of the complex.

It localises to the cell membrane. It catalyses the reaction a quinone + NADH + 5 H(+)(in) = a quinol + NAD(+) + 4 H(+)(out). Its function is as follows. NDH-1 shuttles electrons from NADH, via FMN and iron-sulfur (Fe-S) centers, to quinones in the respiratory chain. The immediate electron acceptor for the enzyme in this species is believed to be menaquinone. Couples the redox reaction to proton translocation (for every two electrons transferred, four hydrogen ions are translocated across the cytoplasmic membrane), and thus conserves the redox energy in a proton gradient. This subunit may bind ubiquinone. In Mycobacterium sp. (strain KMS), this protein is NADH-quinone oxidoreductase subunit H.